The sequence spans 278 residues: Manganese import system permease protein ScaB (278 aa).

The next 8 membrane-spanning stretches (helical) occupy residues 18-38 (ALITAIAIGIVAGAVGCFIIL), 40-60 (GMSLMGDAISHAVLPGVALSF), 61-81 (ILGINFFIGAIAFGLLASILI), 136-156 (VTIGVGVAVLLVIVLLFRPLL), 172-192 (VKLYHYLLMVLLTLVSVTAMQ), 194-214 (VGTILIAAMLITPAATAYLYA), 220-240 (MMLLSSGLGALASILGLFIGY), and 244-264 (IAVGSCIVLTSAIFFLISFFI).

It belongs to the ABC-3 integral membrane protein family.

The protein resides in the cell membrane. In terms of biological role, part of an ABC transporter complex involved in manganese import. This Streptococcus pneumoniae protein is Manganese import system permease protein ScaB.